We begin with the raw amino-acid sequence, 296 residues long: Syntenin-2 (296 aa).

2 PDZ domains span residues 112–191 (EIHL…VRDR) and 196–271 (TVTM…IPTV).

As to quaternary structure, monomer and homodimer. Interacts with SDCBP. Interacts with TM4SF1.

It localises to the cytoplasm. Its subcellular location is the nucleus. It is found in the nucleolus. The protein localises to the nucleoplasm. The protein resides in the cell membrane. It localises to the nucleus speckle. Functionally, binds phosphatidylinositol 4,5-bisphosphate (PIP2). May play a role in the organization of nuclear PIP2, cell division and cell survival. This is Syntenin-2 (Sdcbp2) from Rattus norvegicus (Rat).